A 171-amino-acid chain; its full sequence is Putative pre-16S rRNA nuclease (171 aa).

The protein belongs to the YqgF nuclease family.

It localises to the cytoplasm. Functionally, could be a nuclease involved in processing of the 5'-end of pre-16S rRNA. The chain is Putative pre-16S rRNA nuclease from Corynebacterium diphtheriae (strain ATCC 700971 / NCTC 13129 / Biotype gravis).